A 559-amino-acid chain; its full sequence is NXPE family member 3 (559 aa).

Residues 1–30 form the signal peptide; the sequence is MWINFVKLRLFCCLLAVLMVVVLVVNVTQV. N-linked (GlcNAc...) asparagine glycans are attached at residues asparagine 26, asparagine 237, and asparagine 346.

Belongs to the NXPE family.

Its subcellular location is the secreted. The protein is NXPE family member 3 (NXPE3) of Bos taurus (Bovine).